Reading from the N-terminus, the 563-residue chain is Benzaldehyde lyase (563 aa).

The protein belongs to the TPP enzyme family. Requires a metal cation as cofactor. Thiamine diphosphate serves as cofactor.

It catalyses the reaction benzoin = 2 benzaldehyde. Functionally, cleavage of benzoin-anisoin acyloin linkage. The sequence is that of Benzaldehyde lyase (bznB) from Pseudomonas fluorescens.